Here is a 133-residue protein sequence, read N- to C-terminus: Protransforming growth factor alpha (133 aa).

The N-terminal stretch at M1–L23 is a signal peptide. Residues E24 to A38 constitute a propeptide, removed in mature form. Residues E24–Q97 are Extracellular-facing. N25 carries N-linked (GlcNAc...) asparagine glycosylation. Positions H42–E82 constitute an EGF-like domain. Cystine bridges form between C46–C59, C54–C70, and C72–C81. A propeptide spans V89 to P133 (removed in mature form). A helical transmembrane segment spans residues A98 to I120. Residues H121–P133 lie on the Cytoplasmic side of the membrane.

As to quaternary structure, interacts with the PDZ domains of MAGI3, SDCBP and SNTA1. The interaction with SDCBP, is required for the targeting to the cell surface. In the endoplasmic reticulum, in its immature form (i.e. with a prosegment and lacking full N-glycosylation), interacts with CNIH. In the Golgi apparatus, may form a complex with CNIH and GORASP2. Interacts (via cytoplasmic C-terminal domain) with NKD2. Skin.

The protein resides in the secreted. The protein localises to the extracellular space. It localises to the cell membrane. Its function is as follows. TGF alpha is a mitogenic polypeptide that is able to bind to the EGF receptor/EGFR and to act synergistically with TGF beta to promote anchorage-independent cell proliferation in soft agar. The protein is Protransforming growth factor alpha (TGFA) of Ovis aries (Sheep).